Consider the following 343-residue polypeptide: Arginine N-succinyltransferase (343 aa).

L125 provides a ligand contact to succinyl-CoA. The Proton donor role is filled by H229.

Belongs to the arginine N-succinyltransferase family.

The catalysed reaction is succinyl-CoA + L-arginine = N(2)-succinyl-L-arginine + CoA + H(+). It functions in the pathway amino-acid degradation; L-arginine degradation via AST pathway; L-glutamate and succinate from L-arginine: step 1/5. In terms of biological role, catalyzes the transfer of succinyl-CoA to arginine to produce N(2)-succinylarginine. This chain is Arginine N-succinyltransferase, found in Photorhabdus laumondii subsp. laumondii (strain DSM 15139 / CIP 105565 / TT01) (Photorhabdus luminescens subsp. laumondii).